A 1168-amino-acid chain; its full sequence is ATP-dependent DNA helicase mph1 (1168 aa).

Composition is skewed to polar residues over residues 24–38 and 59–68; these read NITS…QLAS and PTVSQGQATA. The segment at 24–132 is disordered; the sequence is NITSHHPSNS…PFRADMPPEQ (109 aa). Residues 71 to 88 are compositionally biased toward low complexity; it reads RAKTASKPTTSATTSRPS. Residues 89–104 show a composition bias toward polar residues; the sequence is LAQSSQRKNLRQTTLW. In terms of domain architecture, Helicase ATP-binding spans 162-330; sequence IVKNGLFNNT…DVIDNLGISH (169 aa). Residue 175–182 coordinates ATP; that stretch reads LPTGLGKT. The DEAH box motif lies at 278-281; the sequence is DEAH. Positions 506-665 constitute a Helicase C-terminal domain; that stretch reads LVNHFMDAGE…GSRFTFRHDL (160 aa). Disordered regions lie at residues 690–717 and 830–1168; these read SQNP…FNMP and APAN…DDQE. Positions 701 to 714 are enriched in basic residues; sequence SAARMRTKPAKKKF. Positions 895 to 907 are enriched in polar residues; sequence TAKTKSTGVSKQT. The span at 920 to 936 shows a compositional bias: acidic residues; it reads DCEEGGNEYDGNVDDDE. Basic residues predominate over residues 941-959; sequence RNFRSKGRGRGSGRGKKSQ. The span at 985–996 shows a compositional bias: acidic residues; the sequence is GSDDGADLEDFI. Residues 1001–1030 are compositionally biased toward polar residues; it reads EVTSSLQHRPRGSTSPTTAPDAGSSSLSSK.

The protein belongs to the DEAD box helicase family. DEAH subfamily. FANCM sub-subfamily. Interacts with the MHF histone-fold complex to form the FANCM-MHF complex.

It localises to the nucleus. The enzyme catalyses ATP + H2O = ADP + phosphate + H(+). ATP-dependent DNA helicase involved in DNA damage repair by homologous recombination and in genome maintenance. Capable of unwinding D-loops. Plays a role in limiting crossover recombinants during mitotic DNA double-strand break (DSB) repair. Component of a FANCM-MHF complex which promotes gene conversion at blocked replication forks, probably by reversal of the stalled fork. The sequence is that of ATP-dependent DNA helicase mph1 from Neurospora crassa (strain ATCC 24698 / 74-OR23-1A / CBS 708.71 / DSM 1257 / FGSC 987).